A 119-amino-acid chain; its full sequence is Centrocin 1 (119 aa).

A signal peptide spans 1–20 (MMIKIAVVLCAVMATTMVRA). Residues 21–50 (KYVEEQELADLLDLLISEEVSSPDDAVALQ) constitute a propeptide that is removed on maturation. Trp52 and Trp53 each carry 6'-bromotryptophan. Cys75 and Cys110 are disulfide-bonded. A propeptide spanning residues 81–104 (SPQEARAKVLEAFPEMKEADLDEE) is cleaved from the precursor. Residue Asn117 is modified to Asparagine amide.

In terms of assembly, heterodimer of a light and a heavy chain, probably disulfide-linked.

In terms of biological role, has antimicrobial activity against Gram-negative bacteria, Gram-positive bacteria and against fungi with minimum inhibitory concentration (MIC) between 0.78 uM and 50 uM. Shows little hemolytic activity even at a concentration of 100 uM. Functionally, has no antimicrobial activity. Shows no hemolytic activity. This is Centrocin 1 from Echinus esculentus (Sea urchin).